A 192-amino-acid polypeptide reads, in one-letter code: Putative metal-sulfur cluster biosynthesis proteins YuaD (192 aa).

The 165-residue stretch at 15-179 (ADTKSFVTKQ…VYTGDEIEVH (165 aa)) folds into the MOSC domain.

This Bacillus subtilis (strain 168) protein is Putative metal-sulfur cluster biosynthesis proteins YuaD (yuaD).